Consider the following 339-residue polypeptide: Ketol-acid reductoisomerase (NADP(+)) (339 aa).

Residues 1 to 182 (MRVYYDCDVN…GGGRSGIMKT (182 aa)) enclose the KARI N-terminal Rossmann domain. Residues 24 to 27 (YGAQ), S51, T53, and 83 to 86 (DELQ) each bind NADP(+). Residue H108 is part of the active site. NADP(+) is bound at residue G134. The 146-residue stretch at 183–328 (TFREECETDL…DKIRSMMALT (146 aa)) folds into the KARI C-terminal knotted domain. Mg(2+) contacts are provided by D191, E195, E227, and E231. S252 contributes to the substrate binding site.

Belongs to the ketol-acid reductoisomerase family. The cofactor is Mg(2+).

The catalysed reaction is (2R)-2,3-dihydroxy-3-methylbutanoate + NADP(+) = (2S)-2-acetolactate + NADPH + H(+). The enzyme catalyses (2R,3R)-2,3-dihydroxy-3-methylpentanoate + NADP(+) = (S)-2-ethyl-2-hydroxy-3-oxobutanoate + NADPH + H(+). The protein operates within amino-acid biosynthesis; L-isoleucine biosynthesis; L-isoleucine from 2-oxobutanoate: step 2/4. It functions in the pathway amino-acid biosynthesis; L-valine biosynthesis; L-valine from pyruvate: step 2/4. In terms of biological role, involved in the biosynthesis of branched-chain amino acids (BCAA). Catalyzes an alkyl-migration followed by a ketol-acid reduction of (S)-2-acetolactate (S2AL) to yield (R)-2,3-dihydroxy-isovalerate. In the isomerase reaction, S2AL is rearranged via a Mg-dependent methyl migration to produce 3-hydroxy-3-methyl-2-ketobutyrate (HMKB). In the reductase reaction, this 2-ketoacid undergoes a metal-dependent reduction by NADPH to yield (R)-2,3-dihydroxy-isovalerate. The polypeptide is Ketol-acid reductoisomerase (NADP(+)) (Bartonella bacilliformis (strain ATCC 35685 / KC583 / Herrer 020/F12,63)).